The following is a 320-amino-acid chain: MKILVTGGAGFIGSHFVTSLISGDIATPQPVTQVTVVDKLGYGGNLRNLAEASADPRFSFVRGDICDEGLIEGLMARHDTVAHFAAETHVDRSVVASGPFVASNLVGTQVLLDAALRHHIGRFLHVSTDEVYGSIDTGSWAEGHPLAPNSPYAASKAGSDLLALAYHQTHGMDVVVTRCSNNYGPRQFPEKMIPLFVTRLLDGLDVPVYGDGRNIRDWLHVSDHCRGLALALGAGRAGEVYHIGGGWEATNLELTEILLEACGAPASRISFVTDRKGHDRRYSLDYSKIAGELGYRPRVDFTDGIAETVAWYRANRSWWT.

NAD(+) is bound by residues 11 to 12 (FI), 38 to 41 (DKLG), 64 to 65 (DI), 84 to 88 (FAAET), and serine 103. A substrate-binding site is contributed by threonine 88. Threonine 128 contributes to the substrate binding site. The active-site Proton donor is the aspartate 129. Active-site proton acceptor residues include glutamate 130 and tyrosine 152. NAD(+) is bound at residue 152-156 (YAASK). Substrate is bound at residue asparagine 181. An NAD(+)-binding site is contributed by asparagine 182. Substrate is bound by residues 191-192 (KM), 207-209 (PVY), arginine 216, asparagine 251, and 274-278 (DRKGH).

The protein belongs to the NAD(P)-dependent epimerase/dehydratase family. dTDP-glucose dehydratase subfamily. In terms of assembly, homodimer. It depends on NAD(+) as a cofactor.

The catalysed reaction is dTDP-alpha-D-glucose = dTDP-4-dehydro-6-deoxy-alpha-D-glucose + H2O. Probably involved in the biosynthesis of the acarviose moiety of the alpha-glucosidase inhibitor acarbose. Catalyzes the dehydration of dTDP-D-glucose to form dTDP-6-deoxy-D-xylo-4-hexulose via a three-step process involving oxidation, dehydration and reduction. In Actinoplanes sp. (strain ATCC 31044 / CBS 674.73 / SE50/110), this protein is dTDP-glucose 4,6-dehydratase.